We begin with the raw amino-acid sequence, 339 residues long: Serpentine receptor class gamma-7 (339 aa).

7 helical membrane-spanning segments follow: residues 30–50 (YWIQ…IIIT), 65–85 (WILT…LFVV), 98–118 (FSTI…IYNY), 152–172 (IPLF…NTVI), 200–220 (LHLT…LLLM), 239–259 (SIFI…YAFF), and 268–288 (FLVD…PLIF). Positions 319–339 (PFNNTMPRQESPSPNYDSILA) are disordered.

This sequence belongs to the nematode receptor-like protein srg family.

The protein resides in the membrane. The sequence is that of Serpentine receptor class gamma-7 (srg-7) from Caenorhabditis elegans.